Reading from the N-terminus, the 519-residue chain is Probable anion transporter 3, chloroplastic (519 aa).

A chloroplast-targeting transit peptide spans 1–76; it reads MAPPGQLLPL…PPPPATSLPG (76 aa). The span at 56–72 shows a compositional bias: pro residues; sequence LPFAPPRRLSRPPPPAT. The interval 56-82 is disordered; sequence LPFAPPRRLSRPPPPATSLPGASPGGG. The next 12 helical transmembrane spans lie at 100-120, 138-158, 166-186, 188-208, 229-249, 253-273, 326-346, 362-382, 403-423, 424-444, 460-480, and 488-508; these read VAAM…VMSV, VVQS…GALV, VMAY…WAAA, SLWL…VALP, IAMA…PIIM, GIFG…LVWI, WALI…LSWM, AWFS…AGVV, IGFV…SPVI, ASAW…GFLV, MSNT…GFFV, and GFLI…DIFA.

Belongs to the major facilitator superfamily. Sodium/anion cotransporter (TC 2.A.1.14) family.

Its subcellular location is the plastid. It is found in the chloroplast membrane. Probable anion transporter. The chain is Probable anion transporter 3, chloroplastic (PHT4;3) from Oryza sativa subsp. japonica (Rice).